The primary structure comprises 371 residues: Opsin, ultraviolet-sensitive (371 aa).

The Extracellular segment spans residues 1–52 (MSNDSIHWEARYLPAGPPRLLGWNVPAEELIHIPEHWLVYPEPNPSLHYLLA). The N-linked (GlcNAc...) asparagine glycan is linked to Asn-3. Residues 53-73 (LLYILFTFLALLGNGLVIWIF) traverse the membrane as a helical segment. Residues 74 to 84 (CAAKSLRTPSN) are Cytoplasmic-facing. The chain crosses the membrane as a helical span at residues 85 to 105 (MFVVNLAICDFFMMIKTPIFI). Residues 106–121 (YNSFNTGFALGNLGCQ) are Extracellular-facing. The cysteines at positions 120 and 197 are disulfide-linked. A helical membrane pass occupies residues 122–142 (IFAVIGSLTGIGAAITNAAIA). Over 143-161 (YDRYSTIARPLDGKLSRGQ) the chain is Cytoplasmic. The helical transmembrane segment at 162 to 182 (VILFIVLIWTYTIPWALMPVM) threads the bilayer. Topologically, residues 183–209 (GVWGRFVPEGFLTSCSFDYLTDTNEIR) are extracellular. The helical transmembrane segment at 210–230 (IFVATIFTFSYCIPMILIIYY) threads the bilayer. The Cytoplasmic segment spans residues 231-278 (YSQIVSHVVNHEKALREQAKKMNVDSLRSNANTSSQSAEIRIAKAAIT). A helical membrane pass occupies residues 279–299 (ICFLYVLSWTPYGVMSMIGAF). Residues 300 to 302 (GNK) lie on the Extracellular side of the membrane. The chain crosses the membrane as a helical span at residues 303–323 (ALLTPGVTMIPACTCKAVACL). N6-(retinylidene)lysine is present on Lys-318. Topologically, residues 324–371 (DPYVYAISHPKYRLELQKRLPWLELQEKPISDSTSTTTETVNTPPASS) are cytoplasmic.

The protein belongs to the G-protein coupled receptor 1 family. Opsin subfamily. Phosphorylated on some or all of the serine and threonine residues present in the C-terminal region. As to expression, expressed in the dorsal region of the retina.

Its subcellular location is the membrane. Visual pigments are the light-absorbing molecules that mediate vision. They consist of an apoprotein, opsin, covalently linked to 11-cis-retinal. In Apis mellifera (Honeybee), this protein is Opsin, ultraviolet-sensitive (UVOP).